The chain runs to 435 residues: Aspartate--tRNA(Asp/Asn) ligase (435 aa).

Glu-163 is a binding site for L-aspartate. An aspartate region spans residues 185–188 (QLYK). An L-aspartate-binding site is contributed by Arg-206. ATP contacts are provided by residues 206-208 (RAE), 214-216 (RHL), and Glu-358. The L-aspartate site is built by Ser-361 and Arg-365. 406–409 (GAER) contributes to the ATP binding site.

Belongs to the class-II aminoacyl-tRNA synthetase family. Type 2 subfamily. As to quaternary structure, homodimer.

The protein resides in the cytoplasm. It carries out the reaction tRNA(Asx) + L-aspartate + ATP = L-aspartyl-tRNA(Asx) + AMP + diphosphate. Functionally, aspartyl-tRNA synthetase with relaxed tRNA specificity since it is able to aspartylate not only its cognate tRNA(Asp) but also tRNA(Asn). Reaction proceeds in two steps: L-aspartate is first activated by ATP to form Asp-AMP and then transferred to the acceptor end of tRNA(Asp/Asn). Is slightly more efficient at aminoacylating tRNA(Asn) over tRNA(Asp). This Deinococcus radiodurans (strain ATCC 13939 / DSM 20539 / JCM 16871 / CCUG 27074 / LMG 4051 / NBRC 15346 / NCIMB 9279 / VKM B-1422 / R1) protein is Aspartate--tRNA(Asp/Asn) ligase (aspS2).